The sequence spans 310 residues: tRNA-cytidine(32) 2-sulfurtransferase (310 aa).

Residues 48–53 carry the PP-loop motif motif; the sequence is SGGKDS. [4Fe-4S] cluster contacts are provided by C123, C126, and C214.

This sequence belongs to the TtcA family. In terms of assembly, homodimer. It depends on Mg(2+) as a cofactor. [4Fe-4S] cluster serves as cofactor.

The protein resides in the cytoplasm. It carries out the reaction cytidine(32) in tRNA + S-sulfanyl-L-cysteinyl-[cysteine desulfurase] + AH2 + ATP = 2-thiocytidine(32) in tRNA + L-cysteinyl-[cysteine desulfurase] + A + AMP + diphosphate + H(+). It participates in tRNA modification. Catalyzes the ATP-dependent 2-thiolation of cytidine in position 32 of tRNA, to form 2-thiocytidine (s(2)C32). The sulfur atoms are provided by the cysteine/cysteine desulfurase (IscS) system. The sequence is that of tRNA-cytidine(32) 2-sulfurtransferase from Vibrio vulnificus (strain CMCP6).